We begin with the raw amino-acid sequence, 2197 residues long: Protein sickie (2197 aa).

A Calponin-homology (CH) domain is found at 21–129 (RDYAEIYTDW…LFFALSRFKQ (109 aa)). Disordered stretches follow at residues 165–197 (GLRT…QLAQ), 235–311 (CPPD…PQKH), 331–646 (AASV…NKFH), 730–767 (GSSP…SPGK), 788–910 (RNSR…FGYV), 1094–1119 (GPGQ…NRSN), and 1202–1223 (TAAG…GLVG). The span at 175 to 197 (QDKNQQEQQQQQQQQQTPQQLAQ) shows a compositional bias: low complexity. The span at 261 to 290 (SDFNTSRPNSPPTSNHTIQSLKSGNNNSLR) shows a compositional bias: polar residues. Low complexity predominate over residues 291-304 (PPSIKSGIPSPSSP). The segment covering 331 to 341 (AASVASKTQIQ) has biased composition (polar residues). 2 stretches are compositionally biased toward low complexity: residues 342 to 354 (SKRT…FSSA) and 379 to 398 (SVSS…LAAQ). Basic and acidic residues predominate over residues 399-428 (QKKEQANKATKLDKKEKSPARSLNKEESGN). Composition is skewed to polar residues over residues 429-441 (ESRS…TGKS), 561-570 (ANSQPTSHIS), 577-588 (EPSTPQHSSGIY), and 633-644 (SAPNTPTASPNK). Composition is skewed to low complexity over residues 755–766 (GPSSSAGGISPG), 796–831 (SIGT…NNNN), and 887–904 (SSSK…KGVP). Polar residues predominate over residues 1100 to 1119 (GQMSGNESPYVQSPRMNRSN). The stretch at 1262–1342 (YGNAEERQAH…RQTIELLRKQ (81 aa)) forms a coiled coil. 2 disordered regions span residues 1373–1415 (QALG…SMCS) and 1455–1511 (KTSR…SPAK). Polar residues-rich tracts occupy residues 1379-1399 (GSDQ…NNGS) and 1406-1415 (RQHSTDSMCS). The span at 1455 to 1468 (KTSRHVGHHHHHNH) shows a compositional bias: basic residues. A coiled-coil region spans residues 1556-1591 (SSASQLESLKEMMNKMRAEMMSLKHNNERLQKLVTT). Disordered stretches follow at residues 1600–1633 (SLGQ…PPME), 1648–1690 (CLPP…EAAP), and 2172–2197 (SEAQ…AGAE). Positions 1603–1616 (QAISPNGSVAGSSE) are enriched in polar residues. The segment covering 1650 to 1663 (PPAPAPEQPPPPAP) has biased composition (pro residues). The segment covering 2184-2197 (LDSNVTPESSAGAE) has biased composition (polar residues).

The protein belongs to the Nav/unc-53 family.

Functionally, required for the immune deficiency pathway, which mediates responses to Gram-negative bacterial infection. Favors Rel activation and nuclear translocation. The polypeptide is Protein sickie (sick) (Drosophila melanogaster (Fruit fly)).